The sequence spans 636 residues: Carbon monoxide dehydrogenase 1 (636 aa).

Cys-38, Cys-46, Cys-47, Cys-50, Cys-55, and Cys-69 together coordinate [4Fe-4S] cluster. 6 residues coordinate [Ni-4Fe-5S] cluster: His-262, Cys-297, Cys-335, Cys-448, Cys-478, and Cys-528.

This sequence belongs to the Ni-containing carbon monoxide dehydrogenase family. As to quaternary structure, homodimer. [4Fe-4S] cluster serves as cofactor. Requires [Ni-4Fe-5S] cluster as cofactor.

Its subcellular location is the cytoplasm. The protein localises to the cell membrane. The catalysed reaction is CO + 2 oxidized [2Fe-2S]-[ferredoxin] + H2O = 2 reduced [2Fe-2S]-[ferredoxin] + CO2 + 2 H(+). With respect to regulation, inactivated by O(2). Functionally, CODH oxidizes carbon monoxide coupled, via CooF, to the reduction of a hydrogen cation by a hydrogenase (possibly CooH). The sequence is that of Carbon monoxide dehydrogenase 1 (cooS1) from Carboxydothermus hydrogenoformans (strain ATCC BAA-161 / DSM 6008 / Z-2901).